An 890-amino-acid polypeptide reads, in one-letter code: DNA mismatch repair protein MutS (890 aa).

An ATP-binding site is contributed by 607-614 (GPNMSGKS). The tract at residues 832–851 (ESQLSFFGGEQSSKKQDKPL) is disordered.

This sequence belongs to the DNA mismatch repair MutS family.

In terms of biological role, this protein is involved in the repair of mismatches in DNA. It is possible that it carries out the mismatch recognition step. This protein has a weak ATPase activity. The polypeptide is DNA mismatch repair protein MutS (Bacillus cereus (strain B4264)).